A 476-amino-acid polypeptide reads, in one-letter code: Undecaprenyl-phosphate galactose phosphotransferase (476 aa).

The next 5 helical transmembrane spans lie at 15 to 35 (IFLA…SLGC), 52 to 72 (LDTR…WFWI), 93 to 113 (TIVI…WQFS), 115 to 135 (YVWV…RALT), and 283 to 303 (FDIV…IYLW). The Cytoplasmic segment spans residues 304–476 (YKVTRDGGPA…KVVLRRDGAY (173 aa)).

This sequence belongs to the bacterial sugar transferase family.

The protein localises to the cell inner membrane. It carries out the reaction di-trans,octa-cis-undecaprenyl phosphate + UDP-alpha-D-galactose = alpha-D-galactosyl-di-trans,octa-cis-undecaprenyl diphosphate + UMP. The protein operates within bacterial outer membrane biogenesis; LPS O-antigen biosynthesis. In terms of biological role, is responsible for transferring galactose-1-phosphate to the lipid precursor undecaprenol phosphate in the first steps of O-polysaccharide biosynthesis. The sequence is that of Undecaprenyl-phosphate galactose phosphotransferase (rfbP) from Salmonella typhimurium (strain LT2 / SGSC1412 / ATCC 700720).